We begin with the raw amino-acid sequence, 249 residues long: DNA repair protein RecO (249 aa).

This sequence belongs to the RecO family.

Functionally, involved in DNA repair and RecF pathway recombination. The polypeptide is DNA repair protein RecO (Mycoplasma capricolum subsp. capricolum (strain California kid / ATCC 27343 / NCTC 10154)).